Reading from the N-terminus, the 215-residue chain is Cytochrome b6 (215 aa).

The chain crosses the membrane as a helical span at residues 32 to 52 (IFYCIGGITFTCFLVQVATGF). Cys-35 serves as a coordination point for heme c. Heme b-binding residues include Gly-37, Arg-83, His-86, His-100, Arg-103, and Arg-114. A helical transmembrane segment spans residues 90–110 (ASMMVLMMVLHVFRVYLTGGF). Transmembrane regions (helical) follow at residues 116 to 136 (LTWVTGVIMAVCTVSFGVTGY) and 186 to 206 (LHTFVLPLLTAVFMLMHFLMI). Heme b is bound by residues His-187 and His-202. Arg-207 and Ile-211 together coordinate heme c. Ser-212 provides a ligand contact to heme b.

Belongs to the cytochrome b family. PetB subfamily. The 4 large subunits of the cytochrome b6-f complex are cytochrome b6, subunit IV (17 kDa polypeptide, PetD), cytochrome f and the Rieske protein, while the 4 small subunits are PetG, PetL, PetM and PetN. The complex functions as a dimer. Heme b serves as cofactor. It depends on heme c as a cofactor. The N-terminus is blocked.

Its subcellular location is the plastid. The protein localises to the chloroplast thylakoid membrane. Functionally, component of the cytochrome b6-f complex, which mediates electron transfer between photosystem II (PSII) and photosystem I (PSI), cyclic electron flow around PSI, and state transitions. The polypeptide is Cytochrome b6 (Chlamydomonas reinhardtii (Chlamydomonas smithii)).